The sequence spans 335 residues: MAVKVGINGFGRIGRNVFRAALKNPDIEVVAVNDLTDANTLAHLLKYDSVHGRLDAEVSVNGNNLVVNGKEIIVKAERDPENLAWGEIGVDIVVESTGRFTKREDAAKHLEAGAKKVIISAPAKNEDITIVMGVNQDKYDPKAHHVISNASCTTNCLAPFAKVLHEQFGIVRGMMTTVHSYTNDQRILDLPHKDLRRARAAAESIIPTTTGAAKAVALVLPELKGKLNGMAMRVPTPNVSVVDLVAELEKEVTVEEVNAALKAAAEGELKGILAYSEEPLVSRDYNGSTVSSTIDALSTMVIDGKMVKVVSWYDNETGYSHRVVDLAAYIASKGL.

Residues 12-13, D34, R78, and S120 contribute to the NAD(+) site; that span reads RI. D-glyceraldehyde 3-phosphate-binding positions include 151-153 and T182; that span reads SCT. C152 (nucleophile) is an active-site residue. Position 183 (N183) interacts with NAD(+). Residues R197, 210-211, and R233 contribute to the D-glyceraldehyde 3-phosphate site; that span reads TG. N315 is an NAD(+) binding site.

The protein belongs to the glyceraldehyde-3-phosphate dehydrogenase family. As to quaternary structure, homotetramer.

Its subcellular location is the cytoplasm. It catalyses the reaction D-glyceraldehyde 3-phosphate + phosphate + NAD(+) = (2R)-3-phospho-glyceroyl phosphate + NADH + H(+). It functions in the pathway carbohydrate degradation; glycolysis; pyruvate from D-glyceraldehyde 3-phosphate: step 1/5. Its function is as follows. Catalyzes the oxidative phosphorylation of glyceraldehyde 3-phosphate (G3P) to 1,3-bisphosphoglycerate (BPG) using the cofactor NAD. The first reaction step involves the formation of a hemiacetal intermediate between G3P and a cysteine residue, and this hemiacetal intermediate is then oxidized to a thioester, with concomitant reduction of NAD to NADH. The reduced NADH is then exchanged with the second NAD, and the thioester is attacked by a nucleophilic inorganic phosphate to produce BPG. This Geobacillus stearothermophilus (Bacillus stearothermophilus) protein is Glyceraldehyde-3-phosphate dehydrogenase (gap).